The sequence spans 420 residues: ATP phosphoribosyltransferase regulatory subunit (420 aa).

The protein belongs to the class-II aminoacyl-tRNA synthetase family. HisZ subfamily. In terms of assembly, heteromultimer composed of HisG and HisZ subunits.

It is found in the cytoplasm. It functions in the pathway amino-acid biosynthesis; L-histidine biosynthesis; L-histidine from 5-phospho-alpha-D-ribose 1-diphosphate: step 1/9. In terms of biological role, required for the first step of histidine biosynthesis. May allow the feedback regulation of ATP phosphoribosyltransferase activity by histidine. The protein is ATP phosphoribosyltransferase regulatory subunit of Bacillus cereus (strain AH187).